The chain runs to 391 residues: Arsenite methyltransferase (391 aa).

Residues Met1–Glu126 form a disordered region. A compositionally biased stretch (polar residues) spans Cys28–Asn39. A compositionally biased stretch (low complexity) spans Ser40–Ala65. A compositionally biased stretch (polar residues) spans Lys102–Glu116.

Belongs to the methyltransferase superfamily. Arsenite methyltransferase family.

It carries out the reaction arsenic triglutathione + [thioredoxin]-dithiol + S-adenosyl-L-methionine + 2 H2O = methylarsonous acid + [thioredoxin]-disulfide + 3 glutathione + S-adenosyl-L-homocysteine + H(+). The catalysed reaction is arsenic triglutathione + 2 [thioredoxin]-dithiol + 2 S-adenosyl-L-methionine + H2O = dimethylarsinous acid + 2 [thioredoxin]-disulfide + 3 glutathione + 2 S-adenosyl-L-homocysteine + 2 H(+). The enzyme catalyses arsenic triglutathione + 3 [thioredoxin]-dithiol + 3 S-adenosyl-L-methionine = trimethylarsine + 3 [thioredoxin]-disulfide + 3 glutathione + 3 S-adenosyl-L-homocysteine + 3 H(+). In terms of biological role, catalyzes the transfer of a methyl group from AdoMet to arsenite, producing methylated arsenicals. The sequence is that of Arsenite methyltransferase from Halobacterium salinarum (strain ATCC 700922 / JCM 11081 / NRC-1) (Halobacterium halobium).